The primary structure comprises 393 residues: CCA-adding enzyme (393 aa).

Gly-27 and Arg-30 together coordinate ATP. CTP is bound by residues Gly-27 and Arg-30. Mg(2+) contacts are provided by Asp-40 and Asp-42. Residues Arg-111, Asp-154, Arg-157, Arg-160, and Arg-163 each coordinate ATP. CTP-binding residues include Arg-111, Asp-154, Arg-157, Arg-160, and Arg-163.

The protein belongs to the tRNA nucleotidyltransferase/poly(A) polymerase family. Bacterial CCA-adding enzyme type 3 subfamily. Homodimer. It depends on Mg(2+) as a cofactor.

It catalyses the reaction a tRNA precursor + 2 CTP + ATP = a tRNA with a 3' CCA end + 3 diphosphate. It carries out the reaction a tRNA with a 3' CCA end + 2 CTP + ATP = a tRNA with a 3' CCACCA end + 3 diphosphate. In terms of biological role, catalyzes the addition and repair of the essential 3'-terminal CCA sequence in tRNAs without using a nucleic acid template. Adds these three nucleotides in the order of C, C, and A to the tRNA nucleotide-73, using CTP and ATP as substrates and producing inorganic pyrophosphate. tRNA 3'-terminal CCA addition is required both for tRNA processing and repair. Also involved in tRNA surveillance by mediating tandem CCA addition to generate a CCACCA at the 3' terminus of unstable tRNAs. While stable tRNAs receive only 3'-terminal CCA, unstable tRNAs are marked with CCACCA and rapidly degraded. This is CCA-adding enzyme from Listeria monocytogenes serotype 4b (strain F2365).